Consider the following 92-residue polypeptide: Small ribosomal subunit protein uS19c (92 aa).

This sequence belongs to the universal ribosomal protein uS19 family.

The protein resides in the plastid. Its subcellular location is the chloroplast. Protein S19 forms a complex with S13 that binds strongly to the 16S ribosomal RNA. In Lemna minor (Common duckweed), this protein is Small ribosomal subunit protein uS19c.